We begin with the raw amino-acid sequence, 109 residues long: Parvalbumin beta (109 aa).

N-acetylalanine is present on A2. EF-hand domains are found at residues 39–74 and 78–109; these read KSAD…FKAG and LSDA…MIKG. Ca(2+) contacts are provided by D52, D54, S56, Y58, E60, E63, D91, D93, D95, K97, and E102.

Belongs to the parvalbumin family. In terms of processing, the N-terminus is blocked.

Its function is as follows. In muscle, parvalbumin is thought to be involved in relaxation after contraction. It binds two calcium ions. This is Parvalbumin beta from Scomber scombrus (Atlantic mackerel).